Reading from the N-terminus, the 212-residue chain is Thymidylate kinase (212 aa).

An ATP-binding site is contributed by Gly10–Thr17.

The protein belongs to the thymidylate kinase family.

It catalyses the reaction dTMP + ATP = dTDP + ADP. Phosphorylation of dTMP to form dTDP in both de novo and salvage pathways of dTTP synthesis. In Exiguobacterium sibiricum (strain DSM 17290 / CCUG 55495 / CIP 109462 / JCM 13490 / 255-15), this protein is Thymidylate kinase.